Reading from the N-terminus, the 438-residue chain is MAASATTMLLKYPTTVCGIPNSSANNSTDPSNNIVQIPQTTTTNSPLLKFRTPNKPVNAVAAPAFPSVTTTTTTTPSSIQSLVKDFDPLVPAEDALTPPSSWYTEPAFYAHELDRIFYKGWQVAGYSDQVKEANQYFTGTLGNVEYLVCRDGEGKVHAFHNVCTHRASILACGSGKKSCFVCPYHGWVYGMNGSLTKASKATPEQSLNPDELGLVPLKVAVWGPFILISLDRSSREVGDVGSEWLGSCAEDVKAHAFDPNLQFINRSEFPIESNWKIFSDNYLDSSYHVPYAHKYYATELDFDTYQTDMVGNVTIQRVAGTSNNGFNRLGTQAFYAFAYPNFAVERYGPWMTTMHIVPLGPRKCKLVVDYYIEKSKLDDKDYIEKGIAINDNVQKEDVVLCESVQKGLETPAYRSGRYVMPIEKGIHHFHCWLHQVLK.

The N-terminal 58 residues, 1–58 (MAASATTMLLKYPTTVCGIPNSSANNSTDPSNNIVQIPQTTTTNSPLLKFRTPNKPVN), are a transit peptide targeting the chloroplast. A Rieske domain is found at 121–228 (WQVAGYSDQV…VAVWGPFILI (108 aa)). The [2Fe-2S] cluster site is built by Cys163, His165, Cys182, and His185. Residues His288 and His293 each coordinate Fe cation.

It belongs to the choline monooxygenase family. Requires [2Fe-2S] cluster as cofactor. Fe cation serves as cofactor. The cofactor is Mg(2+). Expressed in roots and leaves.

The protein resides in the plastid. The protein localises to the chloroplast stroma. It catalyses the reaction choline + 2 reduced [2Fe-2S]-[ferredoxin] + O2 + 2 H(+) = betaine aldehyde hydrate + 2 oxidized [2Fe-2S]-[ferredoxin] + H2O. The protein operates within amine and polyamine biosynthesis; betaine biosynthesis via choline pathway; betaine aldehyde from choline (monooxygenase route): step 1/1. Functionally, catalyzes the first step of the osmoprotectant glycine betaine synthesis. This is Choline monooxygenase, chloroplastic (CMO) from Atriplex hortensis (Mountain spinach).